The following is a 348-amino-acid chain: Protein disulfide isomerase CRELD2 (348 aa).

The first 22 residues, 1-22, serve as a signal peptide directing secretion; it reads MHLPPAAAVGLLLLLLPPPARV. The CXXC motif lies at 30 to 33; sequence CQRC. Cystine bridges form between cysteine 30-cysteine 33, cysteine 139-cysteine 153, cysteine 147-cysteine 165, and cysteine 167-cysteine 176. Residues 135–177 form the EGF-like 1 domain; that stretch reads DCQECQGGSQRPCSGNGHCDGDGSRQGDGSCQCHVGYKGPLCI. Residues 192–239 form an FU 1 repeat; the sequence is HSFCTACDESCKTCSGPTNKGCVECEVGWTRVEDACVDVDECAAETPP. Asparagine 250 carries an N-linked (GlcNAc...) asparagine glycan. One copy of the FU 2 repeat lies at 252–299; sequence SYTCEECDSTCVGCTGKGPANCKECISGYSKQKGECADIDECSLETKV. The short motif at 262–265 is the CXXC element; it reads CVGC. 4 disulfide bridges follow: cysteine 262-cysteine 265, cysteine 293-cysteine 307, cysteine 300-cysteine 316, and cysteine 318-cysteine 328. In terms of domain architecture, EGF-like 2; calcium-binding spans 289 to 329; sequence DIDECSLETKVCKKENENCYNTPGSFVCVCPEGFEEDRRCL.

It belongs to the CRELD family. In terms of assembly, interacts with CHRNA4. Component of a complex containing at least CRELD2, MANF, MATN3 and PDIA4.

Its subcellular location is the endoplasmic reticulum. The catalysed reaction is Catalyzes the rearrangement of -S-S- bonds in proteins.. Its function is as follows. Protein disulfide isomerase. Might play a role in the unfolded protein response. May regulate transport of alpha4-beta2 neuronal acetylcholine receptor. In Cricetulus griseus (Chinese hamster), this protein is Protein disulfide isomerase CRELD2 (CRELD2).